The following is a 346-amino-acid chain: Probable electron transfer flavoprotein subunit alpha, mitochondrial (346 aa).

285–313 (LYVAIGISGAIQHLAGMKESKMIIAINKD) contributes to the FAD binding site.

This sequence belongs to the ETF alpha-subunit/FixB family. As to quaternary structure, heterodimer of an alpha and a beta subunit. FAD is required as a cofactor.

The protein localises to the mitochondrion matrix. The electron transfer flavoprotein serves as a specific electron acceptor for several dehydrogenases, including five acyl-CoA dehydrogenases, glutaryl-CoA and sarcosine dehydrogenase. It transfers the electrons to the main mitochondrial respiratory chain via ETF-ubiquinone oxidoreductase (ETF dehydrogenase). This Cryptococcus gattii serotype B (strain WM276 / ATCC MYA-4071) (Filobasidiella gattii) protein is Probable electron transfer flavoprotein subunit alpha, mitochondrial (ETF1).